The chain runs to 164 residues: UPF0114 protein YqhA (164 aa).

Helical transmembrane passes span 15-35, 53-73, and 136-156; these read LLAPVYFGLSLALVALALKFF, LILVLLSLVDMTLVGGLLVMV, and LMWYVIIHLTFVLSAFVMGYL.

It belongs to the UPF0114 family.

The protein resides in the cell membrane. This is UPF0114 protein YqhA from Shigella dysenteriae serotype 1 (strain Sd197).